Here is a 491-residue protein sequence, read N- to C-terminus: Ketol-acid reductoisomerase (NADP(+)) (491 aa).

In terms of domain architecture, KARI N-terminal Rossmann spans 15–208; it reads AQLGKCRFMG…GGHRAGVLES (194 aa). NADP(+)-binding positions include 45-48, Arg68, Arg76, Ser78, and 108-110; these read CGAQ and DKQ. His132 is a catalytic residue. Gly158 lines the NADP(+) pocket. KARI C-terminal knotted domains are found at residues 209–344 and 345–484; these read SFVA…TAPQ and FEGK…MTDM. Residues Asp217, Glu221, Glu389, and Glu393 each coordinate Mg(2+). Position 414 (Ser414) interacts with substrate.

It belongs to the ketol-acid reductoisomerase family. Mg(2+) serves as cofactor.

The enzyme catalyses (2R)-2,3-dihydroxy-3-methylbutanoate + NADP(+) = (2S)-2-acetolactate + NADPH + H(+). The catalysed reaction is (2R,3R)-2,3-dihydroxy-3-methylpentanoate + NADP(+) = (S)-2-ethyl-2-hydroxy-3-oxobutanoate + NADPH + H(+). It participates in amino-acid biosynthesis; L-isoleucine biosynthesis; L-isoleucine from 2-oxobutanoate: step 2/4. It functions in the pathway amino-acid biosynthesis; L-valine biosynthesis; L-valine from pyruvate: step 2/4. In terms of biological role, involved in the biosynthesis of branched-chain amino acids (BCAA). Catalyzes an alkyl-migration followed by a ketol-acid reduction of (S)-2-acetolactate (S2AL) to yield (R)-2,3-dihydroxy-isovalerate. In the isomerase reaction, S2AL is rearranged via a Mg-dependent methyl migration to produce 3-hydroxy-3-methyl-2-ketobutyrate (HMKB). In the reductase reaction, this 2-ketoacid undergoes a metal-dependent reduction by NADPH to yield (R)-2,3-dihydroxy-isovalerate. The chain is Ketol-acid reductoisomerase (NADP(+)) from Salmonella agona (strain SL483).